Here is a 99-residue protein sequence, read N- to C-terminus: Sperm protein associated with the nucleus on the X chromosome N4 (99 aa).

The segment covering 1–10 has biased composition (polar residues); the sequence is MEEPTSSTNE. A disordered region spans residues 1-99; sequence MEEPTSSTNE…AGSPQDGGQN (99 aa). The segment covering 11 to 22 has biased composition (basic and acidic residues); it reads NKMKSPCESNKR. The span at 23 to 32 shows a compositional bias: basic residues; that stretch reads KVDKKKKNLH. A compositionally biased stretch (polar residues) spans 64–78; sequence SNQLENNQPTESSTD.

The protein belongs to the SPAN-X family.

The protein is Sperm protein associated with the nucleus on the X chromosome N4 (SPANXN4) of Homo sapiens (Human).